We begin with the raw amino-acid sequence, 347 residues long: Tsukushi (347 aa).

An N-terminal signal peptide occupies residues 1–19; the sequence is MASLLCLFFSLLGLAAIGA. The LRRNT domain maps to 20-61; the sequence is VKNCHPQCRCEVETFGLFDSFSLTKVDCSRIGPGNTPVPIPL. LRR repeat units lie at residues 62–83, 88–109, 112–133, 135–156, 160–175, 185–205, 206–227, 230–252, 255–277, and 280–301; these read DTSH…MLSG, TLVS…AFSK, YLET…CFTG, PLVE…LFTT, DLPI…LTSI, YIKS…LNGI, PLQY…AFDS, ELVH…AFRS, NLQA…VFSG, and SLQE…VFMQ. The N-linked (GlcNAc...) asparagine glycan is linked to Asn285.

In terms of assembly, forms a ternary complex with chordin/CHRD and BMP4.

It localises to the secreted. Functionally, contributes to various developmental events through its interactions with multiple signaling pathways. Dorsalizing factor which functions as an inhibitor of bone morphogenetic proteins during gastrulation. This is Tsukushi (tsku) from Danio rerio (Zebrafish).